We begin with the raw amino-acid sequence, 166 residues long: Thioredoxin, mitochondrial (166 aa).

The transit peptide at 1 to 59 (MAQRLLLRRFLTSVISRKPPQGVWASLTSTSLQTPPYNAGGLTGTPSPARTFHTTRVCS) directs the protein to the mitochondrion. In terms of domain architecture, Thioredoxin spans 61–166 (TFNVQDGPDF…LEAFLKKLIG (106 aa)). Catalysis depends on nucleophile residues Cys90 and Cys93. A disulfide bridge links Cys90 with Cys93. Lys152 carries the N6-acetyllysine; alternate modification. Lys152 is subject to N6-succinyllysine; alternate.

Belongs to the thioredoxin family. Monomer. In terms of tissue distribution, expressed in several tissues with the highest expression levels in heart, muscle, kidney and adrenal gland.

The protein resides in the mitochondrion. Important for the control of mitochondrial reactive oxygen species homeostasis, apoptosis regulation and cell viability. Is involved in various redox reactions including the reduction of protein disulfide bonds, through the reversible oxidation of its active center dithiol to a disulfide. The sequence is that of Thioredoxin, mitochondrial (Txn2) from Rattus norvegicus (Rat).